The following is a 331-amino-acid chain: Vitamin B12 import system permease protein BtuC (331 aa).

Helical transmembrane passes span 21–43 (LALLLAFLVLTLVVSLCAGERWI), 63–85 (PRTLAVMLVGASLAMSGTVMQAV), 90–112 (LAEPGLLGVANGAGVALVLTVLL), 116–138 (LLPVWVLSLSAIAGALLITFLLL), 151–173 (LLIGIALGIICSAVMTWAVYFST), 193–210 (WRHGWLMLTLLPLLLWLS), and 239–261 (VLVLVMGVQVGLSVALAGIIAFI).

The protein belongs to the binding-protein-dependent transport system permease family. FecCD subfamily. The complex is composed of two ATP-binding proteins (BtuD), two transmembrane proteins (BtuC) and a solute-binding protein (BtuF).

Its subcellular location is the cell inner membrane. Its function is as follows. Part of the ABC transporter complex BtuCDF involved in vitamin B12 import. Involved in the translocation of the substrate across the membrane. This is Vitamin B12 import system permease protein BtuC from Pectobacterium atrosepticum (strain SCRI 1043 / ATCC BAA-672) (Erwinia carotovora subsp. atroseptica).